A 295-amino-acid polypeptide reads, in one-letter code: Probable cell division protein WhiA (295 aa).

A DNA-binding region (H-T-H motif) is located at residues 262 to 293 (SLRELGKKLNLTKSQIYSKLKRIIKIAERFGD).

Belongs to the WhiA family.

Involved in cell division and chromosome segregation. The polypeptide is Probable cell division protein WhiA (Thermotoga maritima (strain ATCC 43589 / DSM 3109 / JCM 10099 / NBRC 100826 / MSB8)).